The sequence spans 174 residues: Balbiani ring protein 1 (174 aa).

Residues 28–174 form a disordered region; that stretch reads KCRCTSAGKP…RPEGCGSAMR (147 aa). Repeat copies occupy residues 42–52, 53–63, 64–74, 75–85, 124–134, 135–145, 146–156, and 157–167. 4 X 11 AA tandem repeats stretches follow at residues 42-85 and 124-167; these read EPSK…PRPE. Composition is skewed to basic and acidic residues over residues 49–100 and 121–159; these read PRPE…EKCA and RKSE…EKPS.

In terms of tissue distribution, salivary gland.

The protein resides in the secreted. In terms of biological role, used by the larvae to construct a supramolecular structure, the larval tube. This chain is Balbiani ring protein 1 (BR1), found in Chironomus tentans (Midge).